The sequence spans 427 residues: Trigger factor (427 aa).

The PPIase FKBP-type domain maps to 163-248 (GDTVILDFEG…LHEIKTKEVP (86 aa)).

Belongs to the FKBP-type PPIase family. Tig subfamily.

The protein localises to the cytoplasm. It carries out the reaction [protein]-peptidylproline (omega=180) = [protein]-peptidylproline (omega=0). Involved in protein export. Acts as a chaperone by maintaining the newly synthesized protein in an open conformation. Functions as a peptidyl-prolyl cis-trans isomerase. The chain is Trigger factor from Listeria welshimeri serovar 6b (strain ATCC 35897 / DSM 20650 / CCUG 15529 / CIP 8149 / NCTC 11857 / SLCC 5334 / V8).